Consider the following 164-residue polypeptide: Putative 4-hydroxy-4-methyl-2-oxoglutarate aldolase (164 aa).

Residues 80-83 and Arg102 each bind substrate; that span reads GGNL. Asp103 is an a divalent metal cation binding site.

It belongs to the class II aldolase/RraA-like family. As to quaternary structure, homotrimer. A divalent metal cation serves as cofactor.

The catalysed reaction is 4-hydroxy-4-methyl-2-oxoglutarate = 2 pyruvate. The enzyme catalyses oxaloacetate + H(+) = pyruvate + CO2. In terms of biological role, catalyzes the aldol cleavage of 4-hydroxy-4-methyl-2-oxoglutarate (HMG) into 2 molecules of pyruvate. Also contains a secondary oxaloacetate (OAA) decarboxylase activity due to the common pyruvate enolate transition state formed following C-C bond cleavage in the retro-aldol and decarboxylation reactions. This Paraburkholderia phymatum (strain DSM 17167 / CIP 108236 / LMG 21445 / STM815) (Burkholderia phymatum) protein is Putative 4-hydroxy-4-methyl-2-oxoglutarate aldolase.